A 437-amino-acid polypeptide reads, in one-letter code: Enolase 2 (437 aa).

H160 and E169 together coordinate substrate. E212 serves as the catalytic Proton donor. Mg(2+) contacts are provided by D247, E296, and D321. Residues E296 and D321 each coordinate substrate. The active-site Proton acceptor is the K346. Residues 373–376 (SHRS) and K397 contribute to the substrate site.

The protein belongs to the enolase family. As to quaternary structure, homodimer. The cofactor is Mg(2+).

The protein localises to the cytoplasm. It carries out the reaction (2R)-2-phosphoglycerate = phosphoenolpyruvate + H2O. Its pathway is carbohydrate degradation; glycolysis; pyruvate from D-glyceraldehyde 3-phosphate: step 4/5. The protein is Enolase 2 (ENO2) of Candida glabrata (strain ATCC 2001 / BCRC 20586 / JCM 3761 / NBRC 0622 / NRRL Y-65 / CBS 138) (Yeast).